Reading from the N-terminus, the 489-residue chain is MSVYGLQRLYIGGGYVDATSGKTFDTFDPATGELLAQVQQASAADVDRAVASAREGQREWAAMTAMQRSRILRRAVDLLRERNDELAAIETRDTGKPIGETLAVDIVTGADVIEYYAGLATAIEGLQVPLRAESFVYTRREPLGVCAGIGAWNYPIQIACWKTAPALAAGNAMVFKPSEVTPLTALKLAEIYTEAGVPAGVFNVVQGDGSVGALLTGHPDIAKVSFTGGVETGKKVMSLAGASSLKEVTMELGGKSPLIVFEDADLDRAADIAVTANFFSSGQVCTNGTRVFVHRSVKDAFTQRVLERVKRIRVGKPTDAATNFGPLVSAAQLDKVLGFIDSGKAEGAKLLAGGTRLTDGHFASGQYVAPTVFGDCRDDMKIVREEIFGPVMSILDFESEDEVIARANDTHYGLAAGVVTENLSRAHRTIHRLEAGICWINTWGESPAEMPVGGYKQSGVGRENGITTLEHYTRIKSVQVELGRYNPVF.

The K(+) site is built by Thr26 and Asp93. 150 to 152 lines the NAD(+) pocket; the sequence is GAW. Residue Lys162 is the Charge relay system of the active site. Residue 176–179 coordinates NAD(+); the sequence is KPSE. Val180 contributes to the K(+) binding site. 229 to 232 is an NAD(+) binding site; that stretch reads GVET. Leu245 contacts K(+). Catalysis depends on Glu251, which acts as the Proton acceptor. Residues Gly253, Cys285, and Glu386 each coordinate NAD(+). Catalysis depends on Cys285, which acts as the Nucleophile. Cys285 is subject to Cysteine sulfenic acid (-SOH). 2 residues coordinate K(+): Lys456 and Gly459. Glu463 acts as the Charge relay system in catalysis.

It belongs to the aldehyde dehydrogenase family. As to quaternary structure, dimer of dimers. The cofactor is K(+).

It catalyses the reaction betaine aldehyde + NAD(+) + H2O = glycine betaine + NADH + 2 H(+). It participates in amine and polyamine biosynthesis; betaine biosynthesis via choline pathway; betaine from betaine aldehyde: step 1/1. Involved in the biosynthesis of the osmoprotectant glycine betaine. Catalyzes the irreversible oxidation of betaine aldehyde to the corresponding acid. This Burkholderia ambifaria (strain ATCC BAA-244 / DSM 16087 / CCUG 44356 / LMG 19182 / AMMD) (Burkholderia cepacia (strain AMMD)) protein is Betaine aldehyde dehydrogenase.